A 213-amino-acid polypeptide reads, in one-letter code: Thymidylate kinase (213 aa).

Position 10-17 (10-17 (GLEGAGKT)) interacts with ATP.

Belongs to the thymidylate kinase family.

It carries out the reaction dTMP + ATP = dTDP + ADP. Its function is as follows. Phosphorylation of dTMP to form dTDP in both de novo and salvage pathways of dTTP synthesis. This Salmonella choleraesuis (strain SC-B67) protein is Thymidylate kinase.